Consider the following 365-residue polypeptide: Phospho-N-acetylmuramoyl-pentapeptide-transferase (365 aa).

Helical transmembrane passes span 19–39, 47–67, 91–111, 115–135, 155–175, 184–204, 224–244, 281–301, and 344–364; these read LLIL…WLLT, AVIL…FGVI, AGTP…VALI, FDPQ…IGWV, LLLQ…TGSP, GNLI…VLVA, AIAF…LMIF, AVGL…IFFV, and TQIV…GFIS.

This sequence belongs to the glycosyltransferase 4 family. MraY subfamily. The cofactor is Mg(2+).

It localises to the cell inner membrane. The catalysed reaction is UDP-N-acetyl-alpha-D-muramoyl-L-alanyl-gamma-D-glutamyl-meso-2,6-diaminopimeloyl-D-alanyl-D-alanine + di-trans,octa-cis-undecaprenyl phosphate = di-trans,octa-cis-undecaprenyl diphospho-N-acetyl-alpha-D-muramoyl-L-alanyl-D-glutamyl-meso-2,6-diaminopimeloyl-D-alanyl-D-alanine + UMP. Its pathway is cell wall biogenesis; peptidoglycan biosynthesis. Its function is as follows. Catalyzes the initial step of the lipid cycle reactions in the biosynthesis of the cell wall peptidoglycan: transfers peptidoglycan precursor phospho-MurNAc-pentapeptide from UDP-MurNAc-pentapeptide onto the lipid carrier undecaprenyl phosphate, yielding undecaprenyl-pyrophosphoryl-MurNAc-pentapeptide, known as lipid I. The protein is Phospho-N-acetylmuramoyl-pentapeptide-transferase of Gloeothece citriformis (strain PCC 7424) (Cyanothece sp. (strain PCC 7424)).